The primary structure comprises 23 residues: Pseudin-3 (23 aa).

In terms of tissue distribution, expressed by the skin glands.

It is found in the secreted. Functionally, possesses antifungal activity against C.albicans and is also active against E.coli and S.aureus. This chain is Pseudin-3, found in Pseudis paradoxa (Paradoxical frog).